The sequence spans 212 residues: Probable octanoyltransferase (212 aa).

Positions 28–199 (GVSEEMILVT…NLETLLQRQE (172 aa)) constitute a BPL/LPL catalytic domain. Substrate contacts are provided by residues 66–73 (RGGDATYH), 130–132 (SVG), and 143–145 (GVA). The active-site Acyl-thioester intermediate is the C161.

The protein belongs to the LipB family.

It localises to the cytoplasm. It catalyses the reaction octanoyl-[ACP] + L-lysyl-[protein] = N(6)-octanoyl-L-lysyl-[protein] + holo-[ACP] + H(+). It functions in the pathway protein modification; protein lipoylation via endogenous pathway; protein N(6)-(lipoyl)lysine from octanoyl-[acyl-carrier-protein]: step 1/2. Functionally, catalyzes the transfer of endogenously produced octanoic acid from octanoyl-acyl-carrier-protein onto the lipoyl domains of lipoate-dependent enzymes. Lipoyl-ACP can also act as a substrate although octanoyl-ACP is likely to be the physiological substrate. The sequence is that of Probable octanoyltransferase from Pyrobaculum arsenaticum (strain DSM 13514 / JCM 11321 / PZ6).